A 121-amino-acid chain; its full sequence is Replication protein A 14 kDa subunit (121 aa).

Position 2 is an N-acetylvaline (Val-2). Glycyl lysine isopeptide (Lys-Gly) (interchain with G-Cter in ubiquitin) cross-links involve residues Lys-23, Lys-39, and Lys-88.

Belongs to the replication factor A protein 3 family. Component of the canonical replication protein A complex (RPA), a heterotrimer composed of RPA1, RPA2 and RPA3. Also a component of the aRPA, the alternative replication protein A complex, a trimeric complex similar to the replication protein A complex/RPA but where RPA1 and RPA3 are associated with RPA4 instead of RPA2. Interacts with BRIP1/FANCJ via the RPA1 subunit; following DNA damage they colocalize in foci in the nucleus. Ubiquitinated by RFWD3 at stalled replication forks in response to DNA damage: ubiquitination by RFWD3 does not lead to degradation by the proteasome and promotes removal of the RPA complex from stalled replication forks, promoting homologous recombination.

It localises to the nucleus. In terms of biological role, as part of the heterotrimeric replication protein A complex (RPA/RP-A), binds and stabilizes single-stranded DNA intermediates that form during DNA replication or upon DNA stress. It prevents their reannealing and in parallel, recruits and activates different proteins and complexes involved in DNA metabolism. Thereby, it plays an essential role both in DNA replication and the cellular response to DNA damage. In the cellular response to DNA damage, the RPA complex controls DNA repair and DNA damage checkpoint activation. Through recruitment of ATRIP activates the ATR kinase a master regulator of the DNA damage response. It is required for the recruitment of the DNA double-strand break repair factors RAD51 and RAD52 to chromatin, in response to DNA damage. Also recruits to sites of DNA damage proteins like XPA and XPG that are involved in nucleotide excision repair and is required for this mechanism of DNA repair. Also plays a role in base excision repair (BER), probably through interaction with UNG. RPA stimulates 5'-3' helicase activity of BRIP1/FANCJ. Also recruits SMARCAL1/HARP, which is involved in replication fork restart, to sites of DNA damage. May also play a role in telomere maintenance. RPA3 has its own single-stranded DNA-binding activity and may be responsible for polarity of the binding of the complex to DNA. As part of the alternative replication protein A complex, aRPA, binds single-stranded DNA and probably plays a role in DNA repair. Compared to the RPA2-containing, canonical RPA complex, may not support chromosomal DNA replication and cell cycle progression through S-phase. The aRPA may not promote efficient priming by DNA polymerase alpha but could support DNA synthesis by polymerase delta in presence of PCNA and replication factor C (RFC), the dual incision/excision reaction of nucleotide excision repair and RAD51-dependent strand exchange. The polypeptide is Replication protein A 14 kDa subunit (RPA3) (Homo sapiens (Human)).